Reading from the N-terminus, the 560-residue chain is Oxygen-dependent choline dehydrogenase (560 aa).

Residue 6–35 (DYIIIGGGSAGSVLGSRISEDVSNNVLVLE) coordinates FAD. His-472 acts as the Proton acceptor in catalysis.

It belongs to the GMC oxidoreductase family. Requires FAD as cofactor.

It catalyses the reaction choline + A = betaine aldehyde + AH2. The enzyme catalyses betaine aldehyde + NAD(+) + H2O = glycine betaine + NADH + 2 H(+). It participates in amine and polyamine biosynthesis; betaine biosynthesis via choline pathway; betaine aldehyde from choline (cytochrome c reductase route): step 1/1. Its function is as follows. Involved in the biosynthesis of the osmoprotectant glycine betaine. Catalyzes the oxidation of choline to betaine aldehyde and betaine aldehyde to glycine betaine at the same rate. The sequence is that of Oxygen-dependent choline dehydrogenase from Staphylococcus saprophyticus subsp. saprophyticus (strain ATCC 15305 / DSM 20229 / NCIMB 8711 / NCTC 7292 / S-41).